The following is a 349-amino-acid chain: MDVLIVDDSPVIRQLLRHIIEEGGMRVIGEASNGVEALRCIARRRPDVITMDIHMPVMDGLEASRRIMEEYPTPIVVVTASYSLGDAVTAMQVLEAGAITVTPKPQGPSHPDFERDVESLLRTIRLISEVKVVRRFRRRQGKREEVQPPPPVNHEHEGFQPGVIAIGASTGGPVALKELLQGISRKTPCPVLVVQHISPGFLTSFCEWLNQVSALPVSIGEYGERAERGRVYLAPDGCHMEVDRSCRISLVNGNRDETLCPSVSRLFSSVAKNFGRNAVVVLLSGMGRDGAAEMAELHRLGALTIAQDPATVVVNGMPGEAVKLGAARHVLSPPRIAALLNELPVQSCV.

One can recognise a Response regulatory domain in the interval 2–119 (DVLIVDDSPV…HPDFERDVES (118 aa)). Asp52 is modified (4-aspartylphosphate). In terms of domain architecture, CheB-type methylesterase spans 157–340 (EGFQPGVIAI…LSPPRIAALL (184 aa)). Active-site residues include Ser169, His196, and Asp289.

It belongs to the CheB family. In terms of processing, phosphorylated by CheA. Phosphorylation of the N-terminal regulatory domain activates the methylesterase activity.

The protein resides in the cytoplasm. The enzyme catalyses [protein]-L-glutamate 5-O-methyl ester + H2O = L-glutamyl-[protein] + methanol + H(+). The catalysed reaction is L-glutaminyl-[protein] + H2O = L-glutamyl-[protein] + NH4(+). Functionally, involved in chemotaxis. Part of a chemotaxis signal transduction system that modulates chemotaxis in response to various stimuli. Catalyzes the demethylation of specific methylglutamate residues introduced into the chemoreceptors (methyl-accepting chemotaxis proteins or MCP) by CheR. Also mediates the irreversible deamidation of specific glutamine residues to glutamic acid. This is Protein-glutamate methylesterase/protein-glutamine glutaminase 3 from Hahella chejuensis (strain KCTC 2396).